The following is a 554-amino-acid chain: 3-(3-hydroxy-phenyl)propionate/3-hydroxycinnamic acid hydroxylase (554 aa).

FAD-binding positions include Gln-17–Lys-46 and Phe-285–Asp-295.

The protein belongs to the PheA/TfdB FAD monooxygenase family. The cofactor is FAD.

It catalyses the reaction 3-(3-hydroxyphenyl)propanoate + NADH + O2 + H(+) = 3-(2,3-dihydroxyphenyl)propanoate + NAD(+) + H2O. It carries out the reaction (2E)-3-(3-hydroxyphenyl)prop-2-enoate + NADH + O2 + H(+) = (2E)-3-(2,3-dihydroxyphenyl)prop-2-enoate + NAD(+) + H2O. It functions in the pathway aromatic compound metabolism; 3-phenylpropanoate degradation. Catalyzes the insertion of one atom of molecular oxygen into position 2 of the phenyl ring of 3-(3-hydroxyphenyl)propionate (3-HPP) and hydroxycinnamic acid (3HCI). The sequence is that of 3-(3-hydroxy-phenyl)propionate/3-hydroxycinnamic acid hydroxylase from Escherichia coli (strain 55989 / EAEC).